The chain runs to 114 residues: Hydrogenase maturation factor HypA (114 aa).

Histidine 2 lines the Ni(2+) pocket. The Zn(2+) site is built by cysteine 73, cysteine 76, cysteine 90, and cysteine 93.

Belongs to the HypA/HybF family.

Its function is as follows. Involved in the maturation of [NiFe] hydrogenases. Required for nickel insertion into the metal center of the hydrogenase. This is Hydrogenase maturation factor HypA from Chloroflexus aurantiacus (strain ATCC 29366 / DSM 635 / J-10-fl).